The sequence spans 188 residues: uncharacterized protein (188 aa).

The protein resides in the plastid. The protein localises to the cyanelle. This is an uncharacterized protein from Cyanophora paradoxa.